The chain runs to 25 residues: Snake venom metalloproteinase catroxase (25 aa).

Glu9 is a binding site for Ca(2+).

This sequence belongs to the venom metalloproteinase (M12B) family. Monomer. Zn(2+) serves as cofactor. Expressed by the venom gland.

It localises to the secreted. Inhibited by EDTA, beta-mercaptoethanol, but not by PMSF, p-tosyl-L-phenylalanine chloromethyl ketone, p-tosyl-L-lysine chloromethyl ketone, soybean trypsin inhibitor and aprotinin. Functionally, metalloprotease that is highly active against alpha-(FGA) and beta-chains (FGB) of fibrinogen molecules. This Crotalus atrox (Western diamondback rattlesnake) protein is Snake venom metalloproteinase catroxase.